A 309-amino-acid chain; its full sequence is 4-diphosphocytidyl-2-C-methyl-D-erythritol kinase (309 aa).

The active site involves Lys-11. 94–104 contacts ATP; sequence PVAAGLAGGSA. Asp-136 is an active-site residue.

This sequence belongs to the GHMP kinase family. IspE subfamily.

It carries out the reaction 4-CDP-2-C-methyl-D-erythritol + ATP = 4-CDP-2-C-methyl-D-erythritol 2-phosphate + ADP + H(+). It functions in the pathway isoprenoid biosynthesis; isopentenyl diphosphate biosynthesis via DXP pathway; isopentenyl diphosphate from 1-deoxy-D-xylulose 5-phosphate: step 3/6. Its function is as follows. Catalyzes the phosphorylation of the position 2 hydroxy group of 4-diphosphocytidyl-2C-methyl-D-erythritol. This chain is 4-diphosphocytidyl-2-C-methyl-D-erythritol kinase, found in Synechococcus sp. (strain JA-3-3Ab) (Cyanobacteria bacterium Yellowstone A-Prime).